A 259-amino-acid chain; its full sequence is Ribosomal RNA small subunit methyltransferase A (259 aa).

S-adenosyl-L-methionine contacts are provided by Asn-13, Leu-15, Gly-39, Glu-60, Asp-84, and Asn-101.

The protein belongs to the class I-like SAM-binding methyltransferase superfamily. rRNA adenine N(6)-methyltransferase family. RsmA subfamily.

It is found in the cytoplasm. It carries out the reaction adenosine(1518)/adenosine(1519) in 16S rRNA + 4 S-adenosyl-L-methionine = N(6)-dimethyladenosine(1518)/N(6)-dimethyladenosine(1519) in 16S rRNA + 4 S-adenosyl-L-homocysteine + 4 H(+). In terms of biological role, specifically dimethylates two adjacent adenosines (A1518 and A1519) in the loop of a conserved hairpin near the 3'-end of 16S rRNA in the 30S particle. May play a critical role in biogenesis of 30S subunits. The polypeptide is Ribosomal RNA small subunit methyltransferase A (Mesomycoplasma hyopneumoniae (strain J / ATCC 25934 / NCTC 10110) (Mycoplasma hyopneumoniae)).